A 525-amino-acid chain; its full sequence is MRQDLFLDLLLLQLLWEAPVVSSGPGKELSVVWAQEGAPVHLPCSLEFPHLDPNFLRRGWVTWQHRPDSDQPASIPALDLLQGMPSTRRHPPHRYTVLSVAPGGLRSGRQPLLSHVQLEKRGPQRGDFSLWLRPATRKDAGEYHAFVRLPDRDFSCSLRLRVGQASMIASPPGTLKPSDWVILNCSFSRPDRPVSVHWFQGQSRVPVHNSPRHYLAESFLLLPQVSPLDSGTWGCVLTYRDGFNVSITYNLKVQGLEPVAPLTVYAAEGSRVELPCHLPPVVGTPSLLIAKWTPPGGGPELPVTGKSGNFTLQLENVGRAQAGTYTCSIHLQGRQLSAAVTLAVITVTPKSFGLPGSPQKLLCEVVPASGEGRFVWRPLSDLSRSSLGPVLELQEAKLLAEQWQCQLYEGQKLLGATVYTAESSSGAWSAKRISGDLKGGHLFLSLILGALALFLLVTGAFGFHLWRRQLLRRRFSALEHGIRPPPVQSKIEELEREPETEMEPETEPDPEPQPEPELEPESRQL.

The N-terminal stretch at 1 to 23 is a signal peptide; it reads MRQDLFLDLLLLQLLWEAPVVSS. The Extracellular segment spans residues 24 to 442; sequence GPGKELSVVW…ISGDLKGGHL (419 aa). Positions 37 to 163 constitute an Ig-like V-type domain; sequence GAPVHLPCSL…FSCSLRLRVG (127 aa). Positions 37–246 are interaction with FGL1; sequence GAPVHLPCSL…LTYRDGFNVS (210 aa). A disulfide bridge connects residues Cys44 and Cys156. Ig-like C2-type domains follow at residues 164–246, 258–341, and 345–412; these read QASM…FNVS, PVAP…AAVT, and ITVT…EGQK. Asn184 carries N-linked (GlcNAc...) asparagine glycosylation. A disulfide bond links Cys185 and Cys235. N-linked (GlcNAc...) asparagine glycans are attached at residues Asn244 and Asn309. 2 cysteine pairs are disulfide-bonded: Cys276–Cys327 and Cys363–Cys405. A connecting peptide region spans residues 422–442; that stretch reads ESSSGAWSAKRISGDLKGGHL. The chain crosses the membrane as a helical span at residues 443-463; the sequence is FLSLILGALALFLLVTGAFGF. Topologically, residues 464 to 525 are cytoplasmic; that stretch reads HLWRRQLLRR…PELEPESRQL (62 aa). A disordered region spans residues 486–525; that stretch reads PVQSKIEELEREPETEMEPETEPDPEPQPEPELEPESRQL. A KIEELE motif motif is present at residues 490–495; sequence KIEELE. Basic and acidic residues predominate over residues 490 to 499; the sequence is KIEELEREPE. The 15 X 2 AA tandem repeats of E-X stretch occupies residues 493–522; that stretch reads ELEREPETEMEPETEPDPEPQPEPELEPES. The segment covering 500–519 has biased composition (acidic residues); sequence TEMEPETEPDPEPQPEPELE.

Belongs to the LAG3 family. As to quaternary structure, interacts with MHC class II (MHC-II); selectively recognizes stable complexes of peptide and MHC-II. Interacts with FGL1 (via the Fibrinogen C-terminal domain). In terms of processing, proteolytically cleaved by ADAM10 and ADAM17 within the connecting peptide region, leading to release of Secreted lymphocyte activation gene 3 protein (sLAG-3). ADAM10 mediates constitutive cleavage, but cleavage increases following T-cell activation, whereas shedding by ADAM17 is induced by TCR signaling in a PRKCQ-dependent manner.

It localises to the cell membrane. It is found in the secreted. Functionally, lymphocyte activation gene 3 protein: Inhibitory receptor on antigen activated T-cells. Delivers inhibitory signals upon binding to ligands, such as FGL1. FGL1 constitutes a major ligand of LAG3 and is responsible for LAG3 T-cell inhibitory function. Following TCR engagement, LAG3 associates with CD3-TCR in the immunological synapse and directly inhibits T-cell activation. May inhibit antigen-specific T-cell activation in synergy with PDCD1/PD-1, possibly by acting as a coreceptor for PDCD1/PD-1. Negatively regulates the proliferation, activation, effector function and homeostasis of both CD8(+) and CD4(+) T-cells. Also mediates immune tolerance: constitutively expressed on a subset of regulatory T-cells (Tregs) and contributes to their suppressive function. Also acts as a negative regulator of plasmacytoid dendritic cell (pDCs) activation. Binds MHC class II (MHC-II); the precise role of MHC-II-binding is however unclear. In terms of biological role, may function as a ligand for MHC class II (MHC-II) on antigen-presenting cells (APC), promoting APC activation/maturation and driving Th1 immune response. The polypeptide is Lymphocyte activation gene 3 protein (Lag3) (Rattus norvegicus (Rat)).